A 590-amino-acid polypeptide reads, in one-letter code: Aspartate--tRNA ligase (590 aa).

E172 is a binding site for L-aspartate. The interval 196–199 (QLFK) is aspartate. R218 is an L-aspartate binding site. Residues 218 to 220 (RDE) and Q227 each bind ATP. H449 lines the L-aspartate pocket. ATP is bound at residue E483. Residue R490 coordinates L-aspartate. 535 to 538 (GLDR) is an ATP binding site.

The protein belongs to the class-II aminoacyl-tRNA synthetase family. Type 1 subfamily. As to quaternary structure, homodimer.

It localises to the cytoplasm. The enzyme catalyses tRNA(Asp) + L-aspartate + ATP = L-aspartyl-tRNA(Asp) + AMP + diphosphate. Catalyzes the attachment of L-aspartate to tRNA(Asp) in a two-step reaction: L-aspartate is first activated by ATP to form Asp-AMP and then transferred to the acceptor end of tRNA(Asp). This Mannheimia succiniciproducens (strain KCTC 0769BP / MBEL55E) protein is Aspartate--tRNA ligase.